We begin with the raw amino-acid sequence, 208 residues long: MTKGILGKKVGMTQIFTEAGELIPVTVVEAAPNVVLQVKTVETDGYNAVQVGFDDLRDVLSNKPAKGHVAKANTAPKRFIREFKNIEGLEVGAEITVDTFEAGDVVDVTGTSKGKGFQGVIKRHGQSRGPMAHGSRYHRRPGSMGPVAPNRVFKNKRLAGRMGGNRVTIQNLEIVQVVPEKNVILIKGNVPGAKKSLITIKSAVKAGK.

Positions 123–147 (RHGQSRGPMAHGSRYHRRPGSMGPV) are disordered.

It belongs to the universal ribosomal protein uL3 family. In terms of assembly, part of the 50S ribosomal subunit. Forms a cluster with proteins L14 and L19.

One of the primary rRNA binding proteins, it binds directly near the 3'-end of the 23S rRNA, where it nucleates assembly of the 50S subunit. In Streptococcus sanguinis (strain SK36), this protein is Large ribosomal subunit protein uL3.